The primary structure comprises 340 residues: NAD kinase (340 aa).

The Proton acceptor role is filled by Asp-66. NAD(+) is bound by residues 66-67 (DG), Arg-71, 141-142 (ND), Lys-152, Asp-171, 182-187 (TAYAFS), and Ala-206. Residues 321–340 (AGVAGTEPDKPGERDGKAGS) are disordered. Basic and acidic residues predominate over residues 327–340 (EPDKPGERDGKAGS).

Belongs to the NAD kinase family. The cofactor is a divalent metal cation.

Its subcellular location is the cytoplasm. The catalysed reaction is NAD(+) + ATP = ADP + NADP(+) + H(+). Functionally, involved in the regulation of the intracellular balance of NAD and NADP, and is a key enzyme in the biosynthesis of NADP. Catalyzes specifically the phosphorylation on 2'-hydroxyl of the adenosine moiety of NAD to yield NADP. The sequence is that of NAD kinase from Bifidobacterium longum (strain DJO10A).